We begin with the raw amino-acid sequence, 172 residues long: Large ribosomal subunit protein uL10 (172 aa).

It belongs to the universal ribosomal protein uL10 family. In terms of assembly, part of the ribosomal stalk of the 50S ribosomal subunit. The N-terminus interacts with L11 and the large rRNA to form the base of the stalk. The C-terminus forms an elongated spine to which L12 dimers bind in a sequential fashion forming a multimeric L10(L12)X complex.

Its function is as follows. Forms part of the ribosomal stalk, playing a central role in the interaction of the ribosome with GTP-bound translation factors. This Brucella abortus (strain S19) protein is Large ribosomal subunit protein uL10.